Reading from the N-terminus, the 2334-residue chain is Genome polyprotein (2334 aa).

Residues 487 to 647 (QKVVADIHTL…EGWQSTRHGS (161 aa)) enclose the SF3 helicase domain. O-(5'-phospho-RNA)-tyrosine is present on tyrosine 1007. The Peptidase C24 domain maps to 1102–1237 (GLPGYLRFNG…SKMCTLIDCT (136 aa)). Catalysis depends on for 3CLpro activity residues histidine 1128, aspartate 1145, and cysteine 1205. In terms of domain architecture, RdRp catalytic spans 1488-1612 (GDFLCLDYSK…AMTPMMVSLL (125 aa)). Cysteine 1577 and cysteine 1584 are joined by a disulfide. The segment at 1760-1784 (EGKPRADAPGTATTASVPGTTTDGM) is disordered. The segment covering 1767-1781 (APGTATTASVPGTTT) has biased composition (low complexity).

Mn(2+) is required as a cofactor. In terms of processing, specific enzymatic cleavages by its own cysteine protease yield mature proteins. The protease cleaves itself from the nascent polyprotein autocatalytically. Precursor p41 can be cleaved by viral 3CLpro into protein p19 and VPg, or cleaved by host protease into protein p23/2 and protein p18. Post-translationally, VPg is uridylylated by the polymerase and is covalently attached to the 5'-end of the polyadenylated genomic and subgenomic RNAs. This uridylylated form acts as a nucleotide-peptide primer for the polymerase.

The protein localises to the virion. It localises to the host cytoplasm. The enzyme catalyses a ribonucleoside 5'-triphosphate + H2O = a ribonucleoside 5'-diphosphate + phosphate + H(+). It carries out the reaction Endopeptidase with a preference for cleavage when the P1 position is occupied by Glu-|-Xaa and the P1' position is occupied by Gly-|-Yaa.. The catalysed reaction is RNA(n) + a ribonucleoside 5'-triphosphate = RNA(n+1) + diphosphate. Functionally, together with NTPase and NS4, initiates the formation of the replication complex. Induces the proliferation of the host smooth ER membranes forming long tubular structures. These remodeled membranes probably form the viral factories that contain the replication complex. Its function is as follows. Displays NTPase activity, but no helicase activity. Induces the formation of convoluted membranes derived from the host ER. These remodeled membranes probably form the viral factories that contain the replication complex. Together with NS2 and NS4, initiates the formation of the replication complex. Probable key protein responsible for the formation of membrane alterations by the virus. Induces the formation of convoluted membranes derived from the host ER. These remodeled membranes probably form the viral factories that contain the replication complex. Together with NS2 and NTPase, initiates the formation of the replication complex. In terms of biological role, viral genome-linked protein is covalently linked to the 5'-end of the positive-strand, negative-strand genomic RNAs and subgenomic RNA. Acts as a genome-linked replication primer. May recruit ribosome to viral RNA thereby promoting viral proteins translation. Interacts with host translation initiation complex to allow the translation of viral proteins. Functionally, processes the polyprotein. 3CLpro-RdRp is first released by autocleavage, then all other proteins are cleaved. May cleave polyadenylate-binding protein thereby inhibiting cellular translation. Its function is as follows. Replicates genomic and antigenomic RNA by recognizing replications specific signals. Also transcribes a subgenomic mRNA by initiating RNA synthesis internally on antigenomic RNA. This sgRNA codes for structural proteins. Catalyzes the covalent attachment VPg with viral RNAs. Capsid protein VP60 self assembles to form an icosahedral capsid with a T=3 symmetry, about 35 nm in diameter, and consisting of 180 capsid proteins. A smaller form of capsid with a diameter of 23 nm might be capsid proteins assembled as icosahedron with T=1 symmetry. The capsid encapsulate VP2 proteins and genomic or subgenomic RNA. Attaches virion to target cells by binding histo-blood group antigens, inducing endocytosis of the viral particle. Acidification of the endosome induces conformational change of capsid protein thereby injecting virus genomic RNA into host cytoplasm. The protein is Genome polyprotein of Lepus europaeus (European hare).